The primary structure comprises 354 residues: Holliday junction branch migration complex subunit RuvB (354 aa).

The segment at 1–22 (MTLQTDDFAPAPARRVVSAAPA) is disordered. Residues 5–194 (TDDFAPAPAR…FGIVARLEFY (190 aa)) form a large ATPase domain (RuvB-L) region. Residues 9–22 (APAPARRVVSAAPA) are compositionally biased toward low complexity. ATP contacts are provided by residues leucine 33, arginine 34, glycine 75, lysine 78, threonine 79, threonine 80, 141-143 (EDY), arginine 184, tyrosine 194, and arginine 231. Residue threonine 79 participates in Mg(2+) binding. The interval 195 to 265 (SAQELARIVK…IAERALAMLD (71 aa)) is small ATPAse domain (RuvB-S). The head domain (RuvB-H) stretch occupies residues 268–354 (PEGLDVMDRK…GAQAPGLFAV (87 aa)). DNA contacts are provided by arginine 323 and arginine 328.

It belongs to the RuvB family. As to quaternary structure, homohexamer. Forms an RuvA(8)-RuvB(12)-Holliday junction (HJ) complex. HJ DNA is sandwiched between 2 RuvA tetramers; dsDNA enters through RuvA and exits via RuvB. An RuvB hexamer assembles on each DNA strand where it exits the tetramer. Each RuvB hexamer is contacted by two RuvA subunits (via domain III) on 2 adjacent RuvB subunits; this complex drives branch migration. In the full resolvosome a probable DNA-RuvA(4)-RuvB(12)-RuvC(2) complex forms which resolves the HJ.

The protein resides in the cytoplasm. It carries out the reaction ATP + H2O = ADP + phosphate + H(+). The RuvA-RuvB-RuvC complex processes Holliday junction (HJ) DNA during genetic recombination and DNA repair, while the RuvA-RuvB complex plays an important role in the rescue of blocked DNA replication forks via replication fork reversal (RFR). RuvA specifically binds to HJ cruciform DNA, conferring on it an open structure. The RuvB hexamer acts as an ATP-dependent pump, pulling dsDNA into and through the RuvAB complex. RuvB forms 2 homohexamers on either side of HJ DNA bound by 1 or 2 RuvA tetramers; 4 subunits per hexamer contact DNA at a time. Coordinated motions by a converter formed by DNA-disengaged RuvB subunits stimulates ATP hydrolysis and nucleotide exchange. Immobilization of the converter enables RuvB to convert the ATP-contained energy into a lever motion, pulling 2 nucleotides of DNA out of the RuvA tetramer per ATP hydrolyzed, thus driving DNA branch migration. The RuvB motors rotate together with the DNA substrate, which together with the progressing nucleotide cycle form the mechanistic basis for DNA recombination by continuous HJ branch migration. Branch migration allows RuvC to scan DNA until it finds its consensus sequence, where it cleaves and resolves cruciform DNA. This chain is Holliday junction branch migration complex subunit RuvB, found in Verminephrobacter eiseniae (strain EF01-2).